An 889-amino-acid polypeptide reads, in one-letter code: DNA-directed RNA polymerase subunit Rpo1N (889 aa).

Zn(2+) contacts are provided by Cys-62, Cys-65, Cys-72, His-75, Cys-102, Cys-105, Cys-149, and Cys-152. Positions 466, 468, and 470 each coordinate Mg(2+).

This sequence belongs to the RNA polymerase beta' chain family. Part of the RNA polymerase complex. Mg(2+) serves as cofactor. The cofactor is Zn(2+).

It is found in the cytoplasm. It carries out the reaction RNA(n) + a ribonucleoside 5'-triphosphate = RNA(n+1) + diphosphate. Functionally, DNA-dependent RNA polymerase (RNAP) catalyzes the transcription of DNA into RNA using the four ribonucleoside triphosphates as substrates. Forms the clamp head domain. The chain is DNA-directed RNA polymerase subunit Rpo1N from Methanococcus vannielii (strain ATCC 35089 / DSM 1224 / JCM 13029 / OCM 148 / SB).